A 92-amino-acid chain; its full sequence is Kinetoplastid membrane protein 11B (92 aa).

The protein belongs to the KMP-11 family. Monomer.

It localises to the cytoplasm. The protein resides in the cytoskeleton. It is found in the cell projection. Its subcellular location is the cilium. The protein localises to the flagellum. Its function is as follows. May be involved in the regulation of the cytoskeleton through interaction with the subpellicular microtubules. May be involved in parasite mobility and attachment to the surface of the host cell. Behaves as a strong immunogen during infection. In Leishmania infantum, this protein is Kinetoplastid membrane protein 11B (KMP-11B).